The primary structure comprises 180 residues: Chromosome-anchoring protein RacA (180 aa).

The segment at residues 5–25 (TPFIAKKLGVSPKAVVRIAQQ) is a DNA-binding region (H-T-H motif). Residues 67 to 151 (KASSNEVEEL…LEAALTKEEP (85 aa)) are a coiled coil.

Belongs to the RacA family.

It is found in the cytoplasm. In terms of biological role, required for the formation of axial filaments and for anchoring the origin regions at the cell poles in sporulating cells, thus ensuring proper chromosome segregation in the prespore. Binds in a dispersed manner throughout the chromosome but preferentially to sites clustered in the origin portion of the chromosome, causing condensation of the chromosome and its remodeling into an elongated, anchored structure. The polypeptide is Chromosome-anchoring protein RacA (Bacillus cereus (strain B4264)).